The chain runs to 136 residues: T-cell receptor beta chain V region LB2 (136 aa).

The N-terminal stretch at 1–21 is a signal peptide; the sequence is MNKWVFCWVTLCLLTVETTHG. The tract at residues 22-116 is v segment; the sequence is DGGIITQTPK…EMTVFLCASS (95 aa). Cysteine 45 and cysteine 113 are joined by a disulfide. The tract at residues 117–120 is d segment; it reads IRLA. Residues 121–136 form a j segment region; the sequence is SAETLYFGSGTRLTVL.

The sequence is that of T-cell receptor beta chain V region LB2 from Mus musculus (Mouse).